The primary structure comprises 360 residues: mRNA cap guanine-N(7) methyltransferase (360 aa).

Residues Met-1–Gln-62 are disordered. Residues Arg-7–Arg-19 show a composition bias toward basic and acidic residues. The mRNA cap 0 methyltransferase domain maps to Ser-83–Arg-358. An mRNA-binding site is contributed by Asn-92–Asn-93. S-adenosyl-L-methionine contacts are provided by Lys-96, Gly-118, Asp-140, Asp-168, Gln-191, and Tyr-196.

It belongs to the class I-like SAM-binding methyltransferase superfamily. mRNA cap 0 methyltransferase family. Interacts with cdk9.

Its subcellular location is the nucleus. The enzyme catalyses a 5'-end (5'-triphosphoguanosine)-ribonucleoside in mRNA + S-adenosyl-L-methionine = a 5'-end (N(7)-methyl 5'-triphosphoguanosine)-ribonucleoside in mRNA + S-adenosyl-L-homocysteine. In terms of biological role, responsible for methylating the 5'-cap structure of mRNAs. In Schizosaccharomyces pombe (strain 972 / ATCC 24843) (Fission yeast), this protein is mRNA cap guanine-N(7) methyltransferase (pcm1).